The chain runs to 334 residues: N-acetyl-gamma-glutamyl-phosphate reductase (334 aa).

C154 is an active-site residue.

It belongs to the NAGSA dehydrogenase family. Type 1 subfamily.

It localises to the cytoplasm. It carries out the reaction N-acetyl-L-glutamate 5-semialdehyde + phosphate + NADP(+) = N-acetyl-L-glutamyl 5-phosphate + NADPH + H(+). Its pathway is amino-acid biosynthesis; L-arginine biosynthesis; N(2)-acetyl-L-ornithine from L-glutamate: step 3/4. In terms of biological role, catalyzes the NADPH-dependent reduction of N-acetyl-5-glutamyl phosphate to yield N-acetyl-L-glutamate 5-semialdehyde. This Shigella flexneri protein is N-acetyl-gamma-glutamyl-phosphate reductase.